The chain runs to 151 residues: uncharacterized protein (151 aa).

The interval 1-24 (MHAKTKKLGTDTSYKRPQVTAQEQ) is disordered.

This is an uncharacterized protein from Acanthamoeba polyphaga mimivirus (APMV).